The chain runs to 193 residues: Potassium-transporting ATPase KdpC subunit (193 aa).

A helical transmembrane segment spans residues 8-28; sequence VVLLIFLTLITGVAYPLLATG.

This sequence belongs to the KdpC family. As to quaternary structure, the system is composed of three essential subunits: KdpA, KdpB and KdpC.

Its subcellular location is the cell inner membrane. Part of the high-affinity ATP-driven potassium transport (or Kdp) system, which catalyzes the hydrolysis of ATP coupled with the electrogenic transport of potassium into the cytoplasm. This subunit acts as a catalytic chaperone that increases the ATP-binding affinity of the ATP-hydrolyzing subunit KdpB by the formation of a transient KdpB/KdpC/ATP ternary complex. This Photorhabdus laumondii subsp. laumondii (strain DSM 15139 / CIP 105565 / TT01) (Photorhabdus luminescens subsp. laumondii) protein is Potassium-transporting ATPase KdpC subunit.